A 165-amino-acid chain; its full sequence is MPLNLQDKKAIVDEVKEIAKGALSAVVADTRGVTVAKMTGLRKAAREAGVYMRVVRNTLMRRVVFSTDFECLQDTFVGPTLIAFSTEHPGAAARLFKEFAKLNKEFEIKAAAFEGTLIPVSDIDRLATLPTYEEAIARLMATLKEASVGKLVRTLAALKAKREAI.

This sequence belongs to the universal ribosomal protein uL10 family. Part of the ribosomal stalk of the 50S ribosomal subunit. The N-terminus interacts with L11 and the large rRNA to form the base of the stalk. The C-terminus forms an elongated spine to which L12 dimers bind in a sequential fashion forming a multimeric L10(L12)X complex.

Functionally, forms part of the ribosomal stalk, playing a central role in the interaction of the ribosome with GTP-bound translation factors. The sequence is that of Large ribosomal subunit protein uL10 from Hamiltonella defensa subsp. Acyrthosiphon pisum (strain 5AT).